A 372-amino-acid polypeptide reads, in one-letter code: Phospho-2-dehydro-3-deoxyheptonate aldolase, tyrosine-inhibited (372 aa).

It belongs to the class-I DAHP synthase family.

It is found in the cytoplasm. The protein localises to the nucleus. The catalysed reaction is D-erythrose 4-phosphate + phosphoenolpyruvate + H2O = 7-phospho-2-dehydro-3-deoxy-D-arabino-heptonate + phosphate. It functions in the pathway metabolic intermediate biosynthesis; chorismate biosynthesis; chorismate from D-erythrose 4-phosphate and phosphoenolpyruvate: step 1/7. Functionally, stereospecific condensation of phosphoenolpyruvate (PEP) and D-erythrose-4-phosphate (E4P) giving rise to 3-deoxy-D-arabino-heptulosonate-7-phosphate (DAHP). The sequence is that of Phospho-2-dehydro-3-deoxyheptonate aldolase, tyrosine-inhibited (aro4) from Schizosaccharomyces pombe (strain 972 / ATCC 24843) (Fission yeast).